Here is a 336-residue protein sequence, read N- to C-terminus: Phenylalanine--tRNA ligase alpha subunit (336 aa).

Glu-263 serves as a coordination point for Mg(2+).

The protein belongs to the class-II aminoacyl-tRNA synthetase family. Phe-tRNA synthetase alpha subunit type 1 subfamily. Tetramer of two alpha and two beta subunits. Requires Mg(2+) as cofactor.

It localises to the cytoplasm. The catalysed reaction is tRNA(Phe) + L-phenylalanine + ATP = L-phenylalanyl-tRNA(Phe) + AMP + diphosphate + H(+). The chain is Phenylalanine--tRNA ligase alpha subunit from Thermosynechococcus vestitus (strain NIES-2133 / IAM M-273 / BP-1).